The sequence spans 935 residues: Isoleucine--tRNA ligase (935 aa).

A 'HIGH' region motif is present at residues 58–68; it reads PYANGSIHVGH. Residue glutamate 558 participates in L-isoleucyl-5'-AMP binding. The short motif at 599 to 603 is the 'KMSKS' region element; that stretch reads KMSKS. Lysine 602 contacts ATP. Zn(2+) contacts are provided by cysteine 897, cysteine 900, cysteine 917, and cysteine 920.

The protein belongs to the class-I aminoacyl-tRNA synthetase family. IleS type 1 subfamily. Monomer. Zn(2+) is required as a cofactor.

It localises to the cytoplasm. The enzyme catalyses tRNA(Ile) + L-isoleucine + ATP = L-isoleucyl-tRNA(Ile) + AMP + diphosphate. Functionally, catalyzes the attachment of isoleucine to tRNA(Ile). As IleRS can inadvertently accommodate and process structurally similar amino acids such as valine, to avoid such errors it has two additional distinct tRNA(Ile)-dependent editing activities. One activity is designated as 'pretransfer' editing and involves the hydrolysis of activated Val-AMP. The other activity is designated 'posttransfer' editing and involves deacylation of mischarged Val-tRNA(Ile). The chain is Isoleucine--tRNA ligase from Francisella tularensis subsp. tularensis (strain SCHU S4 / Schu 4).